We begin with the raw amino-acid sequence, 93 residues long: MARSIKKGPFVDDHVAKKVAAESAGSKKVIKTWSRRSTITPDFIGLTFAVHNGKKFIPVFVTENMVGHKLGEFAPTRTFHGHAADKKSKLKKK.

This sequence belongs to the universal ribosomal protein uS19 family.

Protein S19 forms a complex with S13 that binds strongly to the 16S ribosomal RNA. In Geobacter sulfurreducens (strain ATCC 51573 / DSM 12127 / PCA), this protein is Small ribosomal subunit protein uS19.